A 430-amino-acid chain; its full sequence is Synaptotagmin-11 (430 aa).

Over 1–15 (MAEITNIRPSFDVSP) the chain is Vesicular. Residues 16–36 (VAAGLIGASVLVVCVSVTVFV) form a helical membrane-spanning segment. The Cytoplasmic segment spans residues 37-430 (WTCCHQQAEK…IAKWHSLSEY (394 aa)). A compositionally biased stretch (basic and acidic residues) spans 79–90 (RRDKDGPRRESG). Disordered regions lie at residues 79–120 (RRDK…CMDQ) and 132–152 (RSPM…SSPE). Phosphoserine is present on Ser133. The segment covering 134–150 (PMTSLTPGESKATSPSS) has biased composition (polar residues). C2 domains are found at residues 156–278 (MLGS…QLTR) and 290–425 (SRGE…AKWH). Ca(2+)-binding residues include Asp249, Ser252, and Asp255.

The protein belongs to the synaptotagmin family. In terms of assembly, homodimer. Can also form heterodimers. Interacts with PRKN. Interacts (via C2 2 domain) with AGO2 and SND1; the interaction with SND1 is direct. Interacts with KIF1A; the interaction increases in presence of calcium. It depends on Ca(2+) as a cofactor. Post-translationally, ubiquitinated, at least by PRKN, and targeted to the proteasome complex for degradation. Ubiquitination is inhibited by ATP13A2. As to expression, expressed in cerebellun, cerebellar cortex, hippocampus, olfactory bulb and spinal cord (at protein level). Expressed by neurons, astrocytes and microglia (at protein level). Expressed in macrophages (at protein level).

It is found in the cytoplasmic vesicle membrane. The protein resides in the perikaryon. Its subcellular location is the golgi apparatus. The protein localises to the trans-Golgi network membrane. It localises to the recycling endosome membrane. It is found in the lysosome membrane. The protein resides in the cytoplasmic vesicle. Its subcellular location is the phagosome. The protein localises to the cell projection. It localises to the axon. It is found in the dendrite. The protein resides in the postsynaptic density. Its subcellular location is the clathrin-coated vesicle membrane. Functionally, synaptotagmin family member involved in vesicular and membrane trafficking which does not bind Ca(2+). Inhibits clathrin-mediated and bulk endocytosis, functions to ensure precision in vesicle retrieval. Plays an important role in dopamine transmission by regulating endocytosis and the vesicle-recycling process. Essential component of a neuronal vesicular trafficking pathway that differs from the synaptic vesicle trafficking pathway but is crucial for development and synaptic plasticity. In macrophages and microglia, inhibits the conventional cytokine secretion, of at least IL6 and TNF, and phagocytosis. In astrocytes, regulates lysosome exocytosis, mechanism required for the repair of injured astrocyte cell membrane. Required for the ATP13A2-mediated regulation of the autophagy-lysosome pathway. The chain is Synaptotagmin-11 from Mus musculus (Mouse).